Here is a 140-residue protein sequence, read N- to C-terminus: Small ribosomal subunit protein uS9A (140 aa).

This sequence belongs to the universal ribosomal protein uS9 family. As to quaternary structure, component of the small ribosomal subunit (SSU). Mature yeast ribosomes consist of a small (40S) and a large (60S) subunit. The 40S small subunit contains 1 molecule of ribosomal RNA (18S rRNA) and at least 33 different proteins. The large 60S subunit contains 3 rRNA molecules (25S, 5.8S and 5S rRNA) and at least 46 different proteins.

The protein resides in the cytoplasm. In terms of biological role, component of the ribosome, a large ribonucleoprotein complex responsible for the synthesis of proteins in the cell. The small ribosomal subunit (SSU) binds messenger RNAs (mRNAs) and translates the encoded message by selecting cognate aminoacyl-transfer RNA (tRNA) molecules. The large subunit (LSU) contains the ribosomal catalytic site termed the peptidyl transferase center (PTC), which catalyzes the formation of peptide bonds, thereby polymerizing the amino acids delivered by tRNAs into a polypeptide chain. The nascent polypeptides leave the ribosome through a tunnel in the LSU and interact with protein factors that function in enzymatic processing, targeting, and the membrane insertion of nascent chains at the exit of the ribosomal tunnel. This is Small ribosomal subunit protein uS9A (rps1601) from Schizosaccharomyces pombe (strain 972 / ATCC 24843) (Fission yeast).